Here is a 435-residue protein sequence, read N- to C-terminus: Methylenetetrahydrofolate--tRNA-(uracil-5-)-methyltransferase TrmFO (435 aa).

9 to 14 (GAGLAG) lines the FAD pocket.

The protein belongs to the MnmG family. TrmFO subfamily. FAD is required as a cofactor.

The protein localises to the cytoplasm. It catalyses the reaction uridine(54) in tRNA + (6R)-5,10-methylene-5,6,7,8-tetrahydrofolate + NADH + H(+) = 5-methyluridine(54) in tRNA + (6S)-5,6,7,8-tetrahydrofolate + NAD(+). It carries out the reaction uridine(54) in tRNA + (6R)-5,10-methylene-5,6,7,8-tetrahydrofolate + NADPH + H(+) = 5-methyluridine(54) in tRNA + (6S)-5,6,7,8-tetrahydrofolate + NADP(+). In terms of biological role, catalyzes the folate-dependent formation of 5-methyl-uridine at position 54 (M-5-U54) in all tRNAs. The chain is Methylenetetrahydrofolate--tRNA-(uracil-5-)-methyltransferase TrmFO from Staphylococcus epidermidis (strain ATCC 35984 / DSM 28319 / BCRC 17069 / CCUG 31568 / BM 3577 / RP62A).